The following is a 361-amino-acid chain: Peptidyl-prolyl cis-trans isomerase CYP40 (361 aa).

One can recognise a PPIase cyclophilin-type domain in the interval phenylalanine 7–glutamate 172. 2 TPR repeats span residues valine 212 to cysteine 245 and valine 298 to aspartate 331.

It belongs to the cyclophilin-type PPIase family. As to expression, expressed at low levels in seedlings, roots, shoots, leaves, stems, inflorescences, flowers and siliques, with highest levels dividing tissues.

The protein localises to the cytoplasm. The enzyme catalyses [protein]-peptidylproline (omega=180) = [protein]-peptidylproline (omega=0). With respect to regulation, binds cyclosporin A (CsA). CsA mediates some of its effects via an inhibitory action on PPIase. Functionally, PPIases accelerate the folding of proteins. It catalyzes the cis-trans isomerization of proline imidic peptide bonds in oligopeptides. Involved in promoting the expression of the juvenile phase of vegetative development, and, to a lower extent, in regulating the positioning of floral buds, floral morphogenesis and the expression of HSPs. Collaboratively with RBL and ULT1, influences floral meristem (FM) determinacy in an AGAMOUS and SUPERMAN-dependent manner, thus contributing to the floral developmental homeostasis. This chain is Peptidyl-prolyl cis-trans isomerase CYP40, found in Arabidopsis thaliana (Mouse-ear cress).